The sequence spans 263 residues: Probable septum site-determining protein MinC (263 aa).

A disordered region spans residues 107–159 (LPPSGARERPLDIKDSAPRKPAEEPSPSAGEARPEPAKAEEKPAEPVSRPTKV). Composition is skewed to basic and acidic residues over residues 112–129 (ARER…KPAE) and 138–150 (ARPE…EKPA).

This sequence belongs to the MinC family. In terms of assembly, interacts with MinD and FtsZ.

In terms of biological role, cell division inhibitor that blocks the formation of polar Z ring septums. Rapidly oscillates between the poles of the cell to destabilize FtsZ filaments that have formed before they mature into polar Z rings. Prevents FtsZ polymerization. This Pseudomonas aeruginosa (strain LESB58) protein is Probable septum site-determining protein MinC.